Reading from the N-terminus, the 244-residue chain is Tetraspanin-7 (244 aa).

Topologically, residues 1 to 11 are cytoplasmic; the sequence is METKPVITCLK. Residues 12 to 35 traverse the membrane as a helical segment; the sequence is TLLIIYSFVFWITGVILLAVGVWG. Topologically, residues 36 to 51 are extracellular; sequence KLTLGTYISLIAENST. N-linked (GlcNAc...) asparagine glycosylation occurs at N49. Residues 52–70 form a helical membrane-spanning segment; that stretch reads NAPYVLIGTGTTIVVFGLF. Over 71-81 the chain is Cytoplasmic; sequence GCFATCRGSPW. The chain crosses the membrane as a helical span at residues 82-107; sequence MLKLYAMFLSLVFLAELVAGISGFVF. Residues 108-208 lie on the Extracellular side of the membrane; sequence RHEIKDTFLR…LVTSFMETNM (101 aa). N150, N153, N172, and N183 each carry an N-linked (GlcNAc...) asparagine glycan. The helical transmembrane segment at 209 to 229 threads the bilayer; it reads GIIAGVAFGIAFSQLIGMLLA. The Cytoplasmic segment spans residues 230–244; the sequence is CCLSRFITANQYEMV.

The protein belongs to the tetraspanin (TM4SF) family.

It localises to the membrane. In terms of biological role, may be involved in cell proliferation and cell motility. This Pan troglodytes (Chimpanzee) protein is Tetraspanin-7 (TSPAN7).